Reading from the N-terminus, the 226-residue chain is MKISEWPAEERPREKLMQRGVGSLSDAELLAVFLGSGVRGRNVVELARGLLVKFGGLRQLLEADRDAFVGELGLGPVRYGQLQALLEIGRRNLATSIERDCALESPSAVRRYLKAMLRHEPSEVFGCLFLDSKHRPLAFEILFRGTIDRASIYPREVVRRSLMHNAAALILCHNHPSGNSEPSQDDVHMTLALKRGLALIDVRVLDHIIVGDGEPLSMVEQGWIVA.

The MPN domain maps to 102-224 (ALESPSAVRR…PLSMVEQGWI (123 aa)). Residues His173, His175, and Asp186 each coordinate Zn(2+). The short motif at 173-186 (HNHPSGNSEPSQDD) is the JAMM motif element.

This sequence belongs to the UPF0758 family.

This Pseudomonas putida (strain W619) protein is UPF0758 protein PputW619_0186.